The sequence spans 992 residues: UPF0182 protein MT3285 (992 aa).

A run of 7 helical transmembrane segments spans residues 17–39, 59–81, 113–135, 169–191, 212–229, 255–277, and 284–306; these read RILI…LIDA, LATR…FGGL, LVGI…SYWA, LMLS…AHYI, LVSL…AYWL, VLPA…FSAI, and IPAI…WPLI. The tract at residues 906-938 is disordered; the sequence is PTEAAVPPSPAANPPPPASGPQPPPVTAAPPVP. Residues 912–938 are compositionally biased toward pro residues; it reads PPSPAANPPPPASGPQPPPVTAAPPVP.

Belongs to the UPF0182 family.

It is found in the cell membrane. The polypeptide is UPF0182 protein MT3285 (Mycobacterium tuberculosis (strain CDC 1551 / Oshkosh)).